The following is a 271-amino-acid chain: Centromere protein K (271 aa).

Coiled coils occupy residues 11-44 (DTITDVEAVIDTEEELIKECEEMWKDMEDCQNKL) and 102-151 (LRCD…VENQ).

Belongs to the CENP-K/MCM22 family. Component of the CENPA-CAD complex, composed of CENPI, CENPK, CENPL, CENPO, CENPP, CENPQ, CENPR and CENPS. The CENPA-CAD complex interacts with the CENPA-NAC complex, at least composed of CENPA, CENPC, CENPH, CENPM, CENPN, CENPT and CENPU. May interact with Sox6. Highly expressed in testis.

It is found in the nucleus. Its subcellular location is the chromosome. It localises to the centromere. The protein localises to the kinetochore. Its function is as follows. Component of the CENPA-CAD (nucleosome distal) complex, a complex recruited to centromeres which is involved in assembly of kinetochore proteins, mitotic progression and chromosome segregation. May be involved in incorporation of newly synthesized CENPA into centromeres via its interaction with the CENPA-NAC complex. Acts in coordination with KNL1 to recruit the NDC80 complex to the outer kinetochore. The chain is Centromere protein K (Cenpk) from Mus musculus (Mouse).